The chain runs to 780 residues: Exocyst complex component 3-like protein (780 aa).

It belongs to the SEC6 family.

The protein localises to the cytoplasmic vesicle. It is found in the secretory vesicle. Functionally, as part of the exocyst, may play a role in regulated exocytosis. The protein is Exocyst complex component 3-like protein (exoc3l1) of Danio rerio (Zebrafish).